Consider the following 556-residue polypeptide: Guanine nucleotide-binding protein-like 3 homolog (556 aa).

The disordered stretch occupies residues 29–50 (NRKVKKEAKKNGTTNKKEKTIS). A coiled-coil region spans residues 58 to 95 (KEEILVQAEQEREKIKVRQEAAKEAAKIHRIEKRKNNL). One can recognise a CP-type G domain in the interval 138–317 (ASEVRKTVEI…LIDSPGVILV (180 aa)). GTP is bound by residues 184–187 (NKID), 266–273 (GFPNVGKS), and 310–313 (DSPG). Disordered stretches follow at residues 461–508 (APHN…PESL) and 525–556 (KKQKKKSKKTANRADKLSDSLGNMLGGDAMEM). The span at 466 to 478 (DEEEDDDDEMETD) shows a compositional bias: acidic residues. The segment covering 525–535 (KKQKKKSKKTA) has biased composition (basic residues).

The protein belongs to the TRAFAC class YlqF/YawG GTPase family.

Its subcellular location is the nucleus. In terms of biological role, may play a role in regulating cellular proliferation in both germline and somatic tissues. The sequence is that of Guanine nucleotide-binding protein-like 3 homolog from Caenorhabditis elegans.